A 64-amino-acid chain; its full sequence is DNA-binding protein 7a (64 aa).

The protein belongs to the 7 kDa DNA-binding/endoribonuclease P2 family. As to quaternary structure, monomer.

Its subcellular location is the cytoplasm. Functionally, can constrain negative DNA supercoils. May be involved in maintaining the integrity of the genome at high temperature. The protein is DNA-binding protein 7a of Saccharolobus islandicus (strain L.D.8.5 / Lassen #2) (Sulfolobus islandicus).